The chain runs to 429 residues: Histidine--tRNA ligase (429 aa).

This sequence belongs to the class-II aminoacyl-tRNA synthetase family. In terms of assembly, homodimer.

It localises to the cytoplasm. It carries out the reaction tRNA(His) + L-histidine + ATP = L-histidyl-tRNA(His) + AMP + diphosphate + H(+). This chain is Histidine--tRNA ligase, found in Stutzerimonas stutzeri (strain A1501) (Pseudomonas stutzeri).